A 310-amino-acid chain; its full sequence is ADP-L-glycero-D-manno-heptose-6-epimerase (310 aa).

NADP(+)-binding positions include 10–11 (FI), 31–32 (DN), K38, K53, 75–79 (EGACS), and N92. The Proton acceptor role is filled by Y140. K144 contacts NADP(+). N169 contributes to the substrate binding site. Positions 170 and 178 each coordinate NADP(+). The active-site Proton acceptor is K178. Residues S180, H187, 201–204 (FEGS), R209, and Y272 each bind substrate.

Belongs to the NAD(P)-dependent epimerase/dehydratase family. HldD subfamily. As to quaternary structure, homopentamer. It depends on NADP(+) as a cofactor.

The enzyme catalyses ADP-D-glycero-beta-D-manno-heptose = ADP-L-glycero-beta-D-manno-heptose. The protein operates within nucleotide-sugar biosynthesis; ADP-L-glycero-beta-D-manno-heptose biosynthesis; ADP-L-glycero-beta-D-manno-heptose from D-glycero-beta-D-manno-heptose 7-phosphate: step 4/4. It functions in the pathway bacterial outer membrane biogenesis; LPS core biosynthesis. Catalyzes the interconversion between ADP-D-glycero-beta-D-manno-heptose and ADP-L-glycero-beta-D-manno-heptose via an epimerization at carbon 6 of the heptose. This is ADP-L-glycero-D-manno-heptose-6-epimerase from Klebsiella pneumoniae.